The sequence spans 504 residues: Histidine ammonia-lyase (504 aa).

The segment at residues 142 to 144 is a cross-link (5-imidazolinone (Ala-Gly)); that stretch reads ASG. At S143 the chain carries 2,3-didehydroalanine (Ser).

It belongs to the PAL/histidase family. In terms of processing, contains an active site 4-methylidene-imidazol-5-one (MIO), which is formed autocatalytically by cyclization and dehydration of residues Ala-Ser-Gly.

Its subcellular location is the cytoplasm. It catalyses the reaction L-histidine = trans-urocanate + NH4(+). It participates in amino-acid degradation; L-histidine degradation into L-glutamate; N-formimidoyl-L-glutamate from L-histidine: step 1/3. The protein is Histidine ammonia-lyase of Staphylococcus aureus (strain MRSA252).